We begin with the raw amino-acid sequence, 644 residues long: Kininogen-1 (644 aa).

The signal sequence occupies residues 1–18 (MKLITILFLCSRLLLSLT). Q19 bears the Pyrrolidone carboxylic acid; in mature form mark. The Cystatin kininogen-type 1 domain occupies 28-132 (CNDKDLFKAV…TQTCQITPAE (105 aa)). 9 disulfides stabilise this stretch: C28–C614, C83–C94, C107–C126, C142–C145, C206–C218, C229–C248, C264–C267, C328–C340, and C351–C370. Residue N48 is glycosylated (N-linked (GlcNAc...) (complex) asparagine). Residues 120-153 (SVATQTCQITPAEGPVVTAQYDCLGCVHPISTQS) are O-glycosylated at one site only. The region spanning 151 to 254 (TQSPDLEPIL…SQNCDIYPGK (104 aa)) is the Cystatin kininogen-type 2 domain. The N-linked (GlcNAc...) asparagine glycan is linked to N169. A glycan (N-linked (GlcNAc...) (complex) asparagine) is linked at N205. Positions 273 to 376 (TNSPELEETL…TVNCQPLGMI (104 aa)) constitute a Cystatin kininogen-type 3 domain. An N-linked (GlcNAc...) (complex) asparagine glycan is attached at N294. Phosphoserine; by FAM20C is present on S332. P383 carries the 4-hydroxyproline; partial modification. Positions 387–555 (PFRSSRIGEI…TPIPSLAKPG (169 aa)) are disordered. T401 carries O-linked (GalNAc...) threonine glycosylation. The segment covering 418-434 (DSGKEQGHTRRHDWGHE) has biased composition (basic and acidic residues). Repeats lie at residues 420 to 449 (GKEQ…KHER), 450 to 479 (DQGH…KFKL), and 480 to 510 (DDDL…KNKG). A compositionally biased stretch (basic residues) spans 435–446 (KQRKHNLGHGHK). A compositionally biased stretch (basic and acidic residues) spans 477–493 (FKLDDDLEHQGGHVLDH). The segment covering 494-518 (GHKHKHGHGHGKHKNKGKKNGKHNG) has biased composition (basic residues). The span at 524-539 (LASSSEDSTTPSAQTQ) shows a compositional bias: polar residues. Residues T533, T542, T546, T557, and T571 are each glycosylated (O-linked (GalNAc...) threonine). A glycan (O-linked (GalNAc...) serine) is linked at S577. O-linked (GalNAc...) threonine glycosylation is present at T628.

As to quaternary structure, interacts (high molecular weight kininogen) (via amino acids 402-532) with triafestin-1 and triafestin-2, anticoagulant proteins from Triatoma infestans. Interacts (high molecular weight kininogen) (via amino acids 402-532) with short form salivary protein D7R1, an anticoagulant protein from Anopheles stephensi. Interacts (high molecular weight kininogen) (via amino acids 421-466 and 459-513) with haemaphysalin, an anticoagulant protein from Haemaphysalis longicornis. In terms of processing, bradykinin is inactivated by ACE, which removes the dipeptide Arg-Phe from its C-terminus. Post-translationally, bradykinin is released from kininogen by plasma kallikrein. Hydroxylation of Pro-383 occurs prior to the release of bradykinin. In terms of processing, phosphorylated by FAM20C in the extracellular medium. Post-translationally, N- and O-glycosylated. O-glycosylated with core 1 or possibly core 8 glycans. (Microbial infection) Bradykinin is generated upon proteolytic cleavage by S.pyogenes SpeB to produce hypotension during septic shock. In terms of tissue distribution, secreted in plasma. T-kinin is detected in malignant ovarian, colon and breast carcinomas, but not in benign tumors.

It localises to the secreted. The protein localises to the extracellular space. In terms of biological role, kininogens are inhibitors of thiol proteases. HMW-kininogen plays an important role in blood coagulation by helping to position optimally prekallikrein and factor XI next to factor XII; HMW-kininogen inhibits the thrombin- and plasmin-induced aggregation of thrombocytes. LMW-kininogen inhibits the aggregation of thrombocytes. LMW-kininogen is in contrast to HMW-kininogen not involved in blood clotting. Its function is as follows. The active peptide bradykinin is a potent vasodilatator that is released from HMW-kininogen shows a variety of physiological effects: (A) influence in smooth muscle contraction, (B) induction of hypotension, (C) natriuresis and diuresis, (D) decrease in blood glucose level, (E) it is a mediator of inflammation and causes (E1) increase in vascular permeability, (E2) stimulation of nociceptors (4E3) release of other mediators of inflammation (e.g. prostaglandins), (F) it has a cardioprotective effect (directly via bradykinin action, indirectly via endothelium-derived relaxing factor action). The protein is Kininogen-1 (KNG1) of Homo sapiens (Human).